We begin with the raw amino-acid sequence, 664 residues long: UvrABC system protein C (664 aa).

The region spanning 63-141 (LRPGVYRMYD…IKRYRPPYNI (79 aa)) is the GIY-YIG domain. Residues 254–289 (THVQKKLVTAMEQASNDLNYELAAVYRDRLKALAFI) enclose the UVR domain.

Belongs to the UvrC family. In terms of assembly, interacts with UvrB in an incision complex.

The protein localises to the cytoplasm. Its function is as follows. The UvrABC repair system catalyzes the recognition and processing of DNA lesions. UvrC both incises the 5' and 3' sides of the lesion. The N-terminal half is responsible for the 3' incision and the C-terminal half is responsible for the 5' incision. The protein is UvrABC system protein C of Zymomonas mobilis subsp. mobilis (strain ATCC 31821 / ZM4 / CP4).